Here is a 176-residue protein sequence, read N- to C-terminus: Disulfide bond formation protein B (176 aa).

Residues 1-14 lie on the Cytoplasmic side of the membrane; the sequence is MLRFLNQCSHGRGA. Residues 15–31 traverse the membrane as a helical segment; that stretch reads WLLMAFTALALELTALW. Residues 32–49 are Periplasmic-facing; the sequence is FQHVMLLKPCVLCIYERC. C41 and C44 are disulfide-bonded. A helical membrane pass occupies residues 50 to 65; that stretch reads ALFGVLGAALIGAIAP. Topologically, residues 66–71 are cytoplasmic; it reads KTPLRY. The helical transmembrane segment at 72-89 threads the bilayer; it reads VAMVIWLYSAFRGVQLTY. The Periplasmic segment spans residues 90–144; it reads EHTMLQLYPSPFATCDFMARFPEWLPLDKWVPQVFVASGDCAERQWEFLGLEMPQ. C104 and C130 are oxidised to a cystine. Residues 145–163 traverse the membrane as a helical segment; it reads WLLGIFIAYLIVAVLVVIS. Topologically, residues 164–176 are cytoplasmic; it reads QPFKAKKRDLFGR.

It belongs to the DsbB family.

The protein resides in the cell inner membrane. Required for disulfide bond formation in some periplasmic proteins. Acts by oxidizing the DsbA protein. The chain is Disulfide bond formation protein B from Escherichia coli O6:K15:H31 (strain 536 / UPEC).